We begin with the raw amino-acid sequence, 305 residues long: Glycine--tRNA ligase alpha subunit (305 aa).

Belongs to the class-II aminoacyl-tRNA synthetase family. In terms of assembly, tetramer of two alpha and two beta subunits.

Its subcellular location is the cytoplasm. The catalysed reaction is tRNA(Gly) + glycine + ATP = glycyl-tRNA(Gly) + AMP + diphosphate. The sequence is that of Glycine--tRNA ligase alpha subunit (glyQ) from Vibrio cholerae serotype O1 (strain ATCC 39315 / El Tor Inaba N16961).